The following is a 599-amino-acid chain: Pentatricopeptide repeat-containing protein At3g62540, mitochondrial (599 aa).

The transit peptide at Met-1 to Val-99 directs the protein to the mitochondrion. PPR repeat units follow at residues Ala-194–Thr-228, Glu-230–Ile-262, Gly-263–Arg-293, Asn-297–Pro-331, Asp-332–Pro-366, Asn-367–Pro-401, Asp-402–Pro-436, Asp-437–Pro-471, Ser-472–Pro-506, and Asp-507–Thr-541.

Belongs to the PPR family. P subfamily.

The protein localises to the mitochondrion. The chain is Pentatricopeptide repeat-containing protein At3g62540, mitochondrial from Arabidopsis thaliana (Mouse-ear cress).